The sequence spans 515 residues: Hopanoid C-3 methylase (515 aa).

Residues 8 to 141 (PSPLMYTKVF…ETLARRGNID (134 aa)) form the B12-binding domain. The region spanning 181–395 (GTLDPCASIE…DIQHAVLPTR (215 aa)) is the Radical SAM core domain. [4Fe-4S] cluster is bound by residues C195, C199, and C202.

It belongs to the radical SAM superfamily. It depends on [4Fe-4S] cluster as a cofactor.

Functionally, required for methylation of hopanoids at the C-3 position. This chain is Hopanoid C-3 methylase, found in Methylococcus capsulatus (strain ATCC 33009 / NCIMB 11132 / Bath).